The sequence spans 150 residues: uncharacterized protein (150 aa).

The next 3 membrane-spanning stretches (helical) occupy residues 48–68 (LFLL…CFLF), 89–109 (VFIF…YLLP), and 123–143 (REVF…IFTL).

The protein to M.pneumoniae MPN_085 central region.

Its subcellular location is the cell membrane. This is an uncharacterized protein from Mycoplasma pneumoniae (strain ATCC 29342 / M129 / Subtype 1) (Mycoplasmoides pneumoniae).